The sequence spans 128 residues: Sulfurtransferase TusD (128 aa).

Residue cysteine 78 is the Cysteine persulfide intermediate of the active site.

It belongs to the DsrE/TusD family. Heterohexamer, formed by a dimer of trimers. The hexameric TusBCD complex contains 2 copies each of TusB, TusC and TusD. The TusBCD complex interacts with TusE.

It localises to the cytoplasm. Part of a sulfur-relay system required for 2-thiolation of 5-methylaminomethyl-2-thiouridine (mnm(5)s(2)U) at tRNA wobble positions. Accepts sulfur from TusA and transfers it in turn to TusE. The polypeptide is Sulfurtransferase TusD (Buchnera aphidicola subsp. Schizaphis graminum (strain Sg)).